Here is a 101-residue protein sequence, read N- to C-terminus: Small ribosomal subunit protein bS18c (101 aa).

The segment at Lys82–Lys101 is disordered.

This sequence belongs to the bacterial ribosomal protein bS18 family. Part of the 30S ribosomal subunit.

Its subcellular location is the plastid. The protein resides in the chloroplast. This Platanus occidentalis (Sycamore) protein is Small ribosomal subunit protein bS18c.